A 345-amino-acid polypeptide reads, in one-letter code: Sesquiterpene synthase PILCRDRAFT_825684 (345 aa).

The Mg(2+) site is built by aspartate 91, asparagine 226, serine 230, and glutamate 234. Positions 91-95 match the DDXXD motif motif; sequence DELTD. The (2E,6E)-farnesyl diphosphate site is built by arginine 316 and tyrosine 317.

It belongs to the terpene synthase family. Requires Mg(2+) as cofactor.

It carries out the reaction (2E,6E)-farnesyl diphosphate = viridiflorene + diphosphate. Its function is as follows. Terpene cyclase that catalyzes the cyclization of farnesyl diphosphate (FPP) to various sesquiterpenes, including beta-elemene, viridiflorene and gamma-cadinene. Gamma-cadinene is the major product of PILCRDRAFT_825684. This is Sesquiterpene synthase PILCRDRAFT_825684 from Piloderma croceum (strain F 1598).